The primary structure comprises 530 residues: NADH-quinone oxidoreductase subunit C/D (530 aa).

The interval 1–144 (MEEIKYIEPA…NPLRMDNEET (144 aa)) is NADH dehydrogenase I subunit C. Residues 171–530 (EYVVNIGPQH…LDYVVPDIDR (360 aa)) are NADH dehydrogenase I subunit D.

It in the N-terminal section; belongs to the complex I 30 kDa subunit family. In the C-terminal section; belongs to the complex I 49 kDa subunit family. NDH-1 is composed of 13 different subunits. Subunits NuoB, CD, E, F, and G constitute the peripheral sector of the complex.

It localises to the cell inner membrane. It carries out the reaction a quinone + NADH + 5 H(+)(in) = a quinol + NAD(+) + 4 H(+)(out). NDH-1 shuttles electrons from NADH, via FMN and iron-sulfur (Fe-S) centers, to quinones in the respiratory chain. The immediate electron acceptor for the enzyme in this species is believed to be a menaquinone. Couples the redox reaction to proton translocation (for every two electrons transferred, four hydrogen ions are translocated across the cytoplasmic membrane), and thus conserves the redox energy in a proton gradient. The chain is NADH-quinone oxidoreductase subunit C/D from Bacteroides fragilis (strain ATCC 25285 / DSM 2151 / CCUG 4856 / JCM 11019 / LMG 10263 / NCTC 9343 / Onslow / VPI 2553 / EN-2).